Reading from the N-terminus, the 57-residue chain is uncharacterized protein (57 aa).

The helical transmembrane segment at 34-54 (AALLDAAALVVIPGLLTAAAV) threads the bilayer.

It localises to the membrane. This is an uncharacterized protein from Dictyostelium discoideum (Social amoeba).